The following is a 33-amino-acid chain: Cytochrome b6-f complex subunit 8 (33 aa).

Residues 2 to 22 form a helical membrane-spanning segment; that stretch reads LFTLAWASLAAVFSFSIAMVV.

The protein belongs to the PetN family. The 4 large subunits of the cytochrome b6-f complex are cytochrome b6, subunit IV (17 kDa polypeptide, PetD), cytochrome f and the Rieske protein, while the 4 small subunits are PetG, PetL, PetM and PetN. The complex functions as a dimer.

Its subcellular location is the cellular thylakoid membrane. Component of the cytochrome b6-f complex, which mediates electron transfer between photosystem II (PSII) and photosystem I (PSI), cyclic electron flow around PSI, and state transitions. This is Cytochrome b6-f complex subunit 8 from Prochlorococcus marinus (strain MIT 9303).